The following is a 515-amino-acid chain: Peroxisomal catalase A (515 aa).

Position 2 is an N-acetylserine (S2). Catalysis depends on residues H70 and N143. Y355 contacts heme. Residues 513-515 (SKF) carry the Microbody targeting signal motif.

The protein belongs to the catalase family. As to quaternary structure, homotetramer. Heme is required as a cofactor.

It is found in the peroxisome matrix. It carries out the reaction 2 H2O2 = O2 + 2 H2O. Its function is as follows. Catalyzes the degradation of hydrogen peroxide (H(2)O(2)) generated by peroxisomal oxidases to water and oxygen, thereby protecting cells from the toxic effects of hydrogen peroxide. The chain is Peroxisomal catalase A (CTA1) from Saccharomyces cerevisiae (strain ATCC 204508 / S288c) (Baker's yeast).